The chain runs to 280 residues: Phosphatidylserine decarboxylase proenzyme (280 aa).

Catalysis depends on charge relay system; for autoendoproteolytic cleavage activity residues D88, H144, and S247. The Schiff-base intermediate with substrate; via pyruvic acid; for decarboxylase activity role is filled by S247. S247 is subject to Pyruvic acid (Ser); by autocatalysis.

This sequence belongs to the phosphatidylserine decarboxylase family. PSD-B subfamily. Prokaryotic type I sub-subfamily. Heterodimer of a large membrane-associated beta subunit and a small pyruvoyl-containing alpha subunit. Pyruvate serves as cofactor. In terms of processing, is synthesized initially as an inactive proenzyme. Formation of the active enzyme involves a self-maturation process in which the active site pyruvoyl group is generated from an internal serine residue via an autocatalytic post-translational modification. Two non-identical subunits are generated from the proenzyme in this reaction, and the pyruvate is formed at the N-terminus of the alpha chain, which is derived from the carboxyl end of the proenzyme. The autoendoproteolytic cleavage occurs by a canonical serine protease mechanism, in which the side chain hydroxyl group of the serine supplies its oxygen atom to form the C-terminus of the beta chain, while the remainder of the serine residue undergoes an oxidative deamination to produce ammonia and the pyruvoyl prosthetic group on the alpha chain. During this reaction, the Ser that is part of the protease active site of the proenzyme becomes the pyruvoyl prosthetic group, which constitutes an essential element of the active site of the mature decarboxylase.

The protein localises to the cell membrane. It catalyses the reaction a 1,2-diacyl-sn-glycero-3-phospho-L-serine + H(+) = a 1,2-diacyl-sn-glycero-3-phosphoethanolamine + CO2. It participates in phospholipid metabolism; phosphatidylethanolamine biosynthesis; phosphatidylethanolamine from CDP-diacylglycerol: step 2/2. Its function is as follows. Catalyzes the formation of phosphatidylethanolamine (PtdEtn) from phosphatidylserine (PtdSer). The sequence is that of Phosphatidylserine decarboxylase proenzyme from Xanthomonas axonopodis pv. citri (strain 306).